A 112-amino-acid chain; its full sequence is UPF0060 membrane protein XOO1694 (112 aa).

4 consecutive transmembrane segments (helical) span residues 8 to 28, 32 to 52, 62 to 82, and 92 to 112; these read LLLF…PYLW, GGSV…VWLL, VYAA…LWWV, and LLGA…PRSA.

Belongs to the UPF0060 family.

The protein localises to the cell inner membrane. This chain is UPF0060 membrane protein XOO1694, found in Xanthomonas oryzae pv. oryzae (strain MAFF 311018).